The sequence spans 146 residues: Tol-Pal system protein TolR (146 aa).

Residues 16–36 traverse the membrane as a helical segment; that stretch reads VVPYIDVMLVLLVIFMVTAPM.

This sequence belongs to the ExbD/TolR family. In terms of assembly, the Tol-Pal system is composed of five core proteins: the inner membrane proteins TolA, TolQ and TolR, the periplasmic protein TolB and the outer membrane protein Pal. They form a network linking the inner and outer membranes and the peptidoglycan layer.

It localises to the cell inner membrane. Functionally, part of the Tol-Pal system, which plays a role in outer membrane invagination during cell division and is important for maintaining outer membrane integrity. The polypeptide is Tol-Pal system protein TolR (Pseudomonas aeruginosa (strain ATCC 15692 / DSM 22644 / CIP 104116 / JCM 14847 / LMG 12228 / 1C / PRS 101 / PAO1)).